The primary structure comprises 112 residues: Large ribosomal subunit protein uL22 (112 aa).

This sequence belongs to the universal ribosomal protein uL22 family. In terms of assembly, part of the 50S ribosomal subunit.

In terms of biological role, this protein binds specifically to 23S rRNA; its binding is stimulated by other ribosomal proteins, e.g. L4, L17, and L20. It is important during the early stages of 50S assembly. It makes multiple contacts with different domains of the 23S rRNA in the assembled 50S subunit and ribosome. Its function is as follows. The globular domain of the protein is located near the polypeptide exit tunnel on the outside of the subunit, while an extended beta-hairpin is found that lines the wall of the exit tunnel in the center of the 70S ribosome. The chain is Large ribosomal subunit protein uL22 from Sulfurovum sp. (strain NBC37-1).